A 273-amino-acid chain; its full sequence is Phycocyanobilin lyase subunit alpha (273 aa).

It belongs to the CpcE/RpcE/PecE family. CpcE and CpcF associate to form a lyase.

Functionally, required for the chromophorylation of the cpcA gene product. The polypeptide is Phycocyanobilin lyase subunit alpha (cpcE) (Synechococcus elongatus (strain ATCC 33912 / PCC 7942 / FACHB-805) (Anacystis nidulans R2)).